A 212-amino-acid chain; its full sequence is MEKKKGISMAVIKRLPKYHRYLQELMENDIDRISSKELSEKIGFTASQIRQDLNCFGDFGQQGYGYNVKELYNNIGNILGLTRDYNTVIIGAGNIGQAIANYNSFNRLGFKLKGIFDANPRMFGIKIRDIEIQDVEKLKDFVKENDIEIGIICVPRTNAQKVCNELVEGGIKGIWNFAPIDLDVPKDIRVENVHLSESMMTLVYLLNHNDVK.

The H-T-H motif DNA-binding region spans 17–56 (KYHRYLQELMENDIDRISSKELSEKIGFTASQIRQDLNCF). 91 to 96 (GAGNIG) is an NAD(+) binding site.

The protein belongs to the transcriptional regulatory Rex family. In terms of assembly, homodimer.

It localises to the cytoplasm. Its function is as follows. Modulates transcription in response to changes in cellular NADH/NAD(+) redox state. The chain is Redox-sensing transcriptional repressor Rex from Clostridium perfringens (strain SM101 / Type A).